A 276-amino-acid chain; its full sequence is 3-methyl-2-oxobutanoate hydroxymethyltransferase (276 aa).

Positions 49 and 88 each coordinate Mg(2+). Residues 49–50, Asp88, and Lys118 contribute to the 3-methyl-2-oxobutanoate site; that span reads DS. Position 120 (Glu120) interacts with Mg(2+). Residue Glu187 is the Proton acceptor of the active site.

Belongs to the PanB family. In terms of assembly, homodecamer; pentamer of dimers. Requires Mg(2+) as cofactor.

Its subcellular location is the cytoplasm. The enzyme catalyses 3-methyl-2-oxobutanoate + (6R)-5,10-methylene-5,6,7,8-tetrahydrofolate + H2O = 2-dehydropantoate + (6S)-5,6,7,8-tetrahydrofolate. The protein operates within cofactor biosynthesis; (R)-pantothenate biosynthesis; (R)-pantoate from 3-methyl-2-oxobutanoate: step 1/2. Its function is as follows. Catalyzes the reversible reaction in which hydroxymethyl group from 5,10-methylenetetrahydrofolate is transferred onto alpha-ketoisovalerate to form ketopantoate. This chain is 3-methyl-2-oxobutanoate hydroxymethyltransferase, found in Afipia carboxidovorans (strain ATCC 49405 / DSM 1227 / KCTC 32145 / OM5) (Oligotropha carboxidovorans).